The following is a 235-amino-acid chain: MRGILIAIEGINGVEKSTQAIRLKNALENKRYDVIYLHFPSPNTDTGKLILDVLNKIVKMPSEQLHELFTKHRCEFTAEIAALLKLNYIVIVDRYIWSGLAYAQADRIMIDTKNTFNPDYTFFLSPNKSLNEKPLHLQRLYETEEKQEIIFTQFINIINEVPKNKFCAIPANLNKEIIDKIIFSKTIKVFEKNLNLDYIKMYDGMYFNVHDLDLIHFDWQKCIEEDDGIDEEYGL.

10-17 (GINGVEKS) lines the ATP pocket.

Belongs to the thymidylate kinase family.

The catalysed reaction is dTMP + ATP = dTDP + ADP. It participates in pyrimidine metabolism; dTTP biosynthesis. Catalyzes the conversion of dTMP to dTDP. The polypeptide is Thymidylate kinase (TMK) (African swine fever virus (isolate Pig/Kenya/KEN-50/1950) (ASFV)).